The chain runs to 137 residues: uncharacterized protein (137 aa).

Over residues 1-10 (MISVDVPGHP) the composition is skewed to low complexity. Positions 1 to 23 (MISVDVPGHPGDAGGGGGGARKV) are disordered. A compositionally biased stretch (gly residues) spans 11-20 (GDAGGGGGGA).

This is an uncharacterized protein from Human adenovirus C serotype 2 (HAdV-2).